The sequence spans 204 residues: Small ribosomal subunit protein uS4 (204 aa).

Residues 25-45 (AVPSRRAYPPGQHGQARKKRS) are disordered. The 61-residue stretch at 92 to 152 (MRLDNIIFRL…NKENSRRLAE (61 aa)) folds into the S4 RNA-binding domain.

Belongs to the universal ribosomal protein uS4 family. Part of the 30S ribosomal subunit. Contacts protein S5. The interaction surface between S4 and S5 is involved in control of translational fidelity.

In terms of biological role, one of the primary rRNA binding proteins, it binds directly to 16S rRNA where it nucleates assembly of the body of the 30S subunit. With S5 and S12 plays an important role in translational accuracy. The polypeptide is Small ribosomal subunit protein uS4 (Cyanothece sp. (strain PCC 7425 / ATCC 29141)).